Consider the following 445-residue polypeptide: Trigger factor (445 aa).

One can recognise a PPIase FKBP-type domain in the interval 162–247 (GDQVTIDAIG…IKAVHTAEPT (86 aa)).

This sequence belongs to the FKBP-type PPIase family. Tig subfamily.

It localises to the cytoplasm. It carries out the reaction [protein]-peptidylproline (omega=180) = [protein]-peptidylproline (omega=0). Involved in protein export. Acts as a chaperone by maintaining the newly synthesized protein in an open conformation. Functions as a peptidyl-prolyl cis-trans isomerase. This is Trigger factor from Rickettsia rickettsii (strain Sheila Smith).